The sequence spans 332 residues: Thiamine-binding periplasmic protein (332 aa).

An N-terminal signal peptide occupies residues 1–20 (MKLLKLTLISTALFSTAALA). Thiamine contacts are provided by residues tryptophan 202 and 220–223 (YSTS).

The protein belongs to the bacterial solute-binding protein 1 family. In terms of assembly, the complex is composed of two ATP-binding proteins (ThiQ), two transmembrane proteins (ThiP) and a solute-binding protein (ThiB).

It localises to the periplasm. Functionally, part of the ABC transporter complex ThiBPQ involved in thiamine import. This Haemophilus influenzae (strain ATCC 51907 / DSM 11121 / KW20 / Rd) protein is Thiamine-binding periplasmic protein (thiB).